The chain runs to 350 residues: MKPVFCGNFEYDAREGDLERLFRKYGKVERVDMKAGFAFVYMEDERDAEDAIRALDRFEFGRKGRRLRVEWTKSERGGDKRSGGGSRRSSSSMRPSKTLFVINFDADNTRTRDLEKHFEPYGKIVNVRIRRNFAFIQYEAQEDATRALDASNNSKLMDKVISVEYAVKDDDARGNGHSPERRRDRSPERRRRSPSPYKRERGSPDYGRGASPVAAYRKERTSPDYGRRRSPSPYKKSRRGSPEYGRDRRGNDSPRRRERVASPTKYSRSPNNKRERMSPNHSPFKKESPRNGVGEVESPIERRERSRSSPENGQVESPGSIGRRDSDGGYDGAESPMQKSRSPRSPPADE.

RRM domains lie at 2-74 (KPVF…WTKS) and 97-168 (KTLF…YAVK). 2 stretches are compositionally biased toward basic and acidic residues: residues 73-82 (KSERGGDKRS) and 167-187 (VKDDDARGNGHSPERRRDRSP). Disordered stretches follow at residues 73-94 (KSERGGDKRSGGGSRRSSSSMR) and 167-350 (VKDD…PADE). 3 positions are modified to phosphoserine: Ser193, Ser195, and Ser211. Composition is skewed to basic and acidic residues over residues 216-227 (YRKERTSPDYGR) and 240-255 (GSPEYGRDRRGNDSPR). Phosphoserine occurs at positions 241, 262, 278, 298, 308, 335, and 340. Over residues 272–289 (NKRERMSPNHSPFKKESP) the composition is skewed to basic and acidic residues. The span at 299–308 (PIERRERSRS) shows a compositional bias: basic and acidic residues.

This sequence belongs to the splicing factor SR family. RS subfamily. Component of the spliceosome. Interacts with SNRNP35. Interacts with CYP59. Interacts with RCF3 and CPL1. Interacts with DRB1/HYL1 and SE. Highly expressed in roots and flowers. A presumably longer alternatively spliced form is found in leaves, stems and flowers.

It is found in the nucleus. It localises to the nucleus speckle. Functionally, required for constitutive and alternative pre-mRNA splicing. Involved in primary miRNA processing and pri-miRNA biogenesis. Binds both intronless and intron-containing pri-miRNAs. This is Serine/arginine-rich splicing factor RS40 (RS40) from Arabidopsis thaliana (Mouse-ear cress).